The primary structure comprises 163 residues: Low molecular weight protein-tyrosine phosphatase A (163 aa).

C11 functions as the Nucleophile in the catalytic mechanism. R17 is a catalytic residue. D126 serves as the catalytic Proton donor.

The protein belongs to the low molecular weight phosphotyrosine protein phosphatase family.

The enzyme catalyses O-phospho-L-tyrosyl-[protein] + H2O = L-tyrosyl-[protein] + phosphate. Its function is as follows. Key virulence factor required for mycobacterial survival within host macrophages. Exhibits protein tyrosine phosphatase activity. Functionally, supports mycobacteria survival during infection by modulation of the phagosome maturation and modulation of the normal host signaling pathways, including host innate immune responses and cell apoptosis. The protein is Low molecular weight protein-tyrosine phosphatase A (ptpA) of Mycobacterium bovis (strain ATCC BAA-935 / AF2122/97).